The following is a 787-amino-acid chain: Integrin beta-3 (787 aa).

The signal sequence occupies residues 1 to 25; that stretch reads MRAQWPGQLWAALLALGALAGVVVG. Topologically, residues 26–717 are extracellular; sequence ESNICTTRGV…EEPECPKGPD (692 aa). Positions 29-75 constitute a PSI domain; it reads ICTTRGVNSCQQCLAVSPVCAWCSDETLSQGSPRCNLKENLLKDNCA. Intrachain disulfides connect C30–C48, C38–C460, C41–C63, C51–C74, C202–C209, C257–C298, C399–C411, C431–C458, C462–C482, C473–C485, C487–C496, C498–C528, C511–C526, C520–C531, C533–C546, C548–C569, C553–C567, C561–C572, and C574–C583. Residues 134–376 enclose the VWFA domain; sequence DYPVDIYYLM…QLIVDAYGKI (243 aa). Residues S146 and S148 each coordinate Mg(2+). S148, D151, D152, and D183 together coordinate Ca(2+). Residues 202 to 209 form a CX3CL1-binding region; it reads CYNMKNAC. Residues 202-209 are involved in CX3CL1-, NRG1-, FGF1- and IGF1-binding; sequence CYNMKNAC. N240, D242, P244, E245, and D276 together coordinate Ca(2+). Residue E245 coordinates Mg(2+). The tract at residues 292–312 is CX3CL1-binding; it reads LPNDGHCHIGTDNHYSASTTM. N-linked (GlcNAc...) asparagine glycans are attached at residues N345 and N396. 4 consecutive I-EGF domains span residues 462–497, 498–547, 548–584, and 585–624; these read CQAF…SMCE, CSEE…KYCE, CDDF…YYCN, and CTTR…DTCE. N477 is a glycosylation site (N-linked (GlcNAc...) asparagine). An N-linked (GlcNAc...) asparagine glycan is attached at N584. Intrachain disulfides connect C585/C608, C592/C606, C600/C611, C613/C623, C626/C629, C633/C680, C639/C660, C642/C656, and C688/C712. N679 carries N-linked (GlcNAc...) asparagine glycosylation. The chain crosses the membrane as a helical span at residues 718 to 740; the sequence is ILVVLLSVMGAILLIGLATLLIW. The Cytoplasmic segment spans residues 741–787; it reads KLLITIHDRKEFAKFEEERARAKWDTANNPLYKEATSTFTNITYRGT. T766 is modified (phosphothreonine). Residue Y772 is modified to Phosphotyrosine. Positions 776–782 match the LIR motif; that stretch reads TSTFTNI. Phosphothreonine is present on T778. Y784 is modified (phosphotyrosine).

It belongs to the integrin beta chain family. Heterodimer of an alpha and a beta subunit. Beta-3 (ITGB3) associates with either alpha-IIB (ITGA2B) or alpha-V (ITGAV). Interacts with FLNB and COMP. Interacts with PDIA6 following platelet stimulation. Interacts with SYK; upon activation by ITGB3 promotes platelet adhesion. Interacts with MYO10. Interacts with DAB2. Interacts with FERMT2. Integrin ITGAV:ITGB3 interacts with FBLN5 (via N-terminus). Interacts with EMP2; regulates the levels of the heterodimer ITGA5:ITGB3 integrin expression on the plasma membrane. ITGAV:ITGB3 interacts with CCN3. ITGAV:ITGB3 and ITGA2B:ITGB3 interact with SELP (via C-type lectin domain); the interaction mediates cell-cell interaction and adhesion. ITGAV:ITGB3 interacts with AGRA2. ITGAV:ITGB3 is found in a ternary complex with CX3CR1 and CX3CL1. ITGAV:ITGB3 is found in a ternary complex with NRG1 and ERBB3. ITGAV:ITGB3 is found in a ternary complex with FGF1 and FGFR1. ITGAV:ITGB3 interacts with FGF2; it is likely that FGF2 can simultaneously bind ITGAV:ITGB3 and FGF receptors. ITGAV:ITGB3 binds to IL1B. ITGAV:ITGB3 is found in a ternary complex with IGF1 and IGF1R. ITGAV:ITGB3 interacts with IGF2. ITGAV:ITGB3 interacts with FBN1. ITGAV:ITGB3 interacts with CD9, CD81 and CD151 (via second extracellular domain). Interacts (via the allosteric site (site 2)) with CXCL12 in a CXCR4-independent manner. Interacts with MXRA8/DICAM; the interaction inhibits ITGAV:ITGB3 heterodimer formation. ITGAV:ITGB3 interacts with PTN. Forms a complex with PTPRZ1 and PTN that stimulates endothelial cell migration through ITGB3 Tyr-772 phosphorylation. ITGAV:ITGB3 interacts with SLC6A4. Interacts with SLC6A4 (via C-terminus); this interaction regulates SLC6A4 trafficking. ITGA2B:ITGB3 interacts with PPIA/CYPA; the interaction is ROS and PPIase activity-dependent and is increased in the presence of thrombin. Interacts with tensin TNS3; TNS3 also interacts with PEAK1, thus acting as an adapter molecule to bridge the association of PEAK1 with ITGB3. Interacts with TM4SF19. Post-translationally, phosphorylated on tyrosine residues in response to thrombin-induced platelet aggregation. Probably involved in outside-in signaling.

Its subcellular location is the cell membrane. It localises to the cell projection. The protein localises to the lamellipodium membrane. The protein resides in the cell junction. It is found in the focal adhesion. Its subcellular location is the postsynaptic cell membrane. It localises to the synapse. In terms of biological role, integrin alpha-V/beta-3 (ITGAV:ITGB3) is a receptor for cytotactin, fibronectin, laminin, matrix metalloproteinase-2, osteopontin, osteomodulin, prothrombin, thrombospondin, vitronectin and von Willebrand factor. Integrin alpha-IIB/beta-3 (ITGA2B:ITGB3) is a receptor for fibronectin, fibrinogen, plasminogen, prothrombin, thrombospondin and vitronectin. Integrins alpha-IIB/beta-3 and alpha-V/beta-3 recognize the sequence R-G-D in a wide array of ligands. Integrin alpha-IIB/beta-3 recognizes the sequence H-H-L-G-G-G-A-K-Q-A-G-D-V in fibrinogen gamma chain. Following activation integrin alpha-IIB/beta-3 brings about platelet/platelet interaction through binding of soluble fibrinogen. This step leads to rapid platelet aggregation which physically plugs ruptured endothelial surfaces. Fibrinogen binding enhances SELP expression in activated platelets. ITGAV:ITGB3 binds to fractalkine (CX3CL1) and acts as its coreceptor in CX3CR1-dependent fractalkine signaling. ITGAV:ITGB3 binds to NRG1 (via EGF domain) and this binding is essential for NRG1-ERBB signaling. ITGAV:ITGB3 binds to FGF1 and this binding is essential for FGF1 signaling. ITGAV:ITGB3 binds to FGF2 and this binding is essential for FGF2 signaling. ITGAV:ITGB3 binds to IGF1 and this binding is essential for IGF1 signaling. ITGAV:ITGB3 binds to IGF2 and this binding is essential for IGF2 signaling. ITGAV:ITGB3 binds to IL1B and this binding is essential for IL1B signaling. ITGAV:ITGB3 binds to PLA2G2A via a site (site 2) which is distinct from the classical ligand-binding site (site 1) and this induces integrin conformational changes and enhanced ligand binding to site 1. ITGAV:ITGB3 acts as a receptor for fibrillin-1 (FBN1) and mediates R-G-D-dependent cell adhesion to FBN1. ITGAV:ITGB3 binds to the Lilrb4a/Gp49b receptor and enhances the Lilrb4a-mediated inhibition of mast cell activation. ITGAV:ITGB3 also suppresses marginal zone B cell antibody production through its interaction with Lilrb4a. In brain, plays a role in synaptic transmission and plasticity. Involved in the regulation of the serotonin neurotransmission, is required to localize to specific compartments within the synapse the serotonin receptor SLC6A4 and for an appropriate reuptake of serotonin. Controls excitatory synaptic strength by regulating GRIA2-containing AMPAR endocytosis, which affects AMPAR abundance and composition. ITGAV:ITGB3 act as a receptor for CD40LG. ITGAV:ITGB3 acts as a receptor for IBSP and promotes cell adhesion and migration to IBSP. The protein is Integrin beta-3 of Mus musculus (Mouse).